Here is a 250-residue protein sequence, read N- to C-terminus: MTMTSLSESLEASDPSKSAFLEFSHGYQSHQQHSPGVSHAHYPVHGLHQGAHSQYDAAFSPGAASYSRPLAYHYSTAHHHPGAYLPYQHNSAVGYSRVEDADSEKQSSIESGEIRLNGKGKKIRKPRTIYSSLQLQALNQRFQQTQYLALPERADLAAKLGLTQTQVKIWFQNKRSKYKKIMKHGSSGPEGEHLQAASASGAPCSPGMPPLWDVSMPSKGAPIHSGGYMNSFGHWYSGHHQDPMARTQMM.

The homeobox DNA-binding region spans 123-182 (IRKPRTIYSSLQLQALNQRFQQTQYLALPERADLAAKLGLTQTQVKIWFQNKRSKYKKIM). The interval 182-202 (MKHGSSGPEGEHLQAASASGA) is disordered.

This sequence belongs to the distal-less homeobox family.

It is found in the nucleus. The sequence is that of Homeobox protein Dlx4a (dlx4a) from Danio rerio (Zebrafish).